Reading from the N-terminus, the 322-residue chain is Acetyl-coenzyme A carboxylase carboxyl transferase subunit alpha (322 aa).

The CoA carboxyltransferase C-terminal domain occupies 39 to 296 (DLTALKKQLI…HSKLVTELNY (258 aa)).

It belongs to the AccA family. In terms of assembly, acetyl-CoA carboxylase is a heterohexamer composed of biotin carboxyl carrier protein (accB), biotin carboxylase (accC) and two subunits each of ACCase subunit alpha (accA) and ACCase subunit beta (accD).

It is found in the plastid. Its subcellular location is the chloroplast. It catalyses the reaction N(6)-carboxybiotinyl-L-lysyl-[protein] + acetyl-CoA = N(6)-biotinyl-L-lysyl-[protein] + malonyl-CoA. The protein operates within lipid metabolism; malonyl-CoA biosynthesis; malonyl-CoA from acetyl-CoA: step 1/1. In terms of biological role, component of the acetyl coenzyme A carboxylase (ACC) complex. First, biotin carboxylase catalyzes the carboxylation of biotin on its carrier protein (BCCP) and then the CO(2) group is transferred by the carboxyltransferase to acetyl-CoA to form malonyl-CoA. This chain is Acetyl-coenzyme A carboxylase carboxyl transferase subunit alpha, found in Antithamnion sp. (Red alga).